Consider the following 164-residue polypeptide: E3 ubiquitin ligase complex SCF subunit sconC (164 aa).

Positions 106-164 (ILAANYLDIKALLDVGCKTVANMIKGKSPEEIRKTFNIQNDFTPEEEDQIRRENEWAEE) are interaction with the F-box domain of F-box proteins.

This sequence belongs to the SKP1 family. In terms of assembly, component of the SCF (SKP1-CUL1-F-box protein) E3 ubiquitin ligase complexes.

It functions in the pathway protein modification; protein ubiquitination. Functionally, essential component of the SCF (SKP1-CUL1-F-box protein) E3 ubiquitin ligase complexes, which mediate the ubiquitination and subsequent proteasomal degradation of target proteins. Controls sulfur metabolite repression, probably by mediating the inactivation or degradation of the metR transcription factor. The protein is E3 ubiquitin ligase complex SCF subunit sconC (sconC) of Arthroderma benhamiae (strain ATCC MYA-4681 / CBS 112371) (Trichophyton mentagrophytes).